The following is a 457-amino-acid chain: tRNA modification GTPase MnmE (457 aa).

Arginine 23, glutamate 85, and arginine 124 together coordinate (6S)-5-formyl-5,6,7,8-tetrahydrofolate. In terms of domain architecture, TrmE-type G spans glycine 220–leucine 376. Residue asparagine 230 coordinates K(+). GTP contacts are provided by residues asparagine 230–serine 235, threonine 249–threonine 255, and aspartate 274–glycine 277. Serine 234 contacts Mg(2+). K(+) is bound by residues threonine 249, leucine 251, and threonine 254. Position 255 (threonine 255) interacts with Mg(2+). Lysine 457 provides a ligand contact to (6S)-5-formyl-5,6,7,8-tetrahydrofolate.

The protein belongs to the TRAFAC class TrmE-Era-EngA-EngB-Septin-like GTPase superfamily. TrmE GTPase family. In terms of assembly, homodimer. Heterotetramer of two MnmE and two MnmG subunits. It depends on K(+) as a cofactor.

The protein resides in the cytoplasm. Its function is as follows. Exhibits a very high intrinsic GTPase hydrolysis rate. Involved in the addition of a carboxymethylaminomethyl (cmnm) group at the wobble position (U34) of certain tRNAs, forming tRNA-cmnm(5)s(2)U34. This Nitratidesulfovibrio vulgaris (strain DP4) (Desulfovibrio vulgaris) protein is tRNA modification GTPase MnmE.